Here is a 183-residue protein sequence, read N- to C-terminus: Probable actin-related protein 2/3 complex subunit 3 (183 aa).

The protein belongs to the ARPC3 family. In terms of assembly, component of the Arp2/3 complex.

It is found in the cytoplasm. It localises to the cytoskeleton. Functions as a component of the Arp2/3 complex which is involved in regulation of actin polymerization and together with an activating nucleation-promoting factor (NPF) mediates the formation of branched actin networks. The sequence is that of Probable actin-related protein 2/3 complex subunit 3 (arx-5) from Caenorhabditis elegans.